Reading from the N-terminus, the 394-residue chain is 2-oxoglutarate and iron-dependent oxygenase domain-containing protein CP2 (394 aa).

Residues methionine 1 to threonine 35 form a disordered region. The span at valine 17–threonine 35 shows a compositional bias: polar residues. Residues aspartate 248–serine 347 enclose the Fe2OG dioxygenase domain. Residues histidine 268, aspartate 270, and histidine 328 each coordinate Fe cation. Arginine 338 is a 2-oxoglutarate binding site.

Fe(2+) serves as cofactor. It depends on L-ascorbate as a cofactor. As to expression, expressed in roots, cotyledons, rosette leaves, cauline leaves, inflorescences and siliques.

The protein localises to the nucleus. Its subcellular location is the nucleoplasm. Its function is as follows. Participates in the epigenetic repression of flowering genes in association with ICU11. Functions in the repression of several members of the MADS-box transcription factors family, including SEP3, during vegetative development via histone modification. This is 2-oxoglutarate and iron-dependent oxygenase domain-containing protein CP2 from Arabidopsis thaliana (Mouse-ear cress).